A 347-amino-acid polypeptide reads, in one-letter code: Globoside alpha-1,3-N-acetylgalactosaminyltransferase 1 (347 aa).

The Cytoplasmic portion of the chain corresponds to 1 to 6 (MTRPRL). Residues 7-27 (AQGLAFFLLGGTGLWVLWKFI) traverse the membrane as a helical; Signal-anchor for type II membrane protein segment. Over 28–347 (KDWLLVSYIP…VKKNANWLRT (320 aa)) the chain is Lumenal. N-linked (GlcNAc...) asparagine glycosylation is present at asparagine 108. Residues 116 to 121 (FAVGKY), 206 to 208 (DVD), and 228 to 231 (HPGY) contribute to the substrate site. Mn(2+) is bound by residues aspartate 206 and aspartate 208. The active-site Nucleophile is glutamate 298.

The protein belongs to the glycosyltransferase 6 family. The cofactor is Mn(2+).

The protein resides in the golgi apparatus membrane. It catalyses the reaction a globoside Gb4Cer (d18:1(4E)) + UDP-N-acetyl-alpha-D-galactosamine = a globoside Forssman (d18:1(4E)) + UDP + H(+). The enzyme catalyses a globoside Gb4Cer + UDP-N-acetyl-alpha-D-galactosamine = a globoside IV3GalNAc-Gb4Cer + UDP + H(+). The protein operates within protein modification; protein glycosylation. Its function is as follows. Catalyzes the formation of Forssman glycolipid via the addition of N-acetylgalactosamine (GalNAc) in alpha-1,3-linkage to GalNAcb-1,3Gala-1,4Galb-1,4GlcCer (Gb4Cer). Forssman glycolipid (also called Forssman antigen; FG) probably serves for adherence of some pathogens. Conversely, it diminishes Shiga toxins susceptibility. The polypeptide is Globoside alpha-1,3-N-acetylgalactosaminyltransferase 1 (Mus musculus (Mouse)).